Reading from the N-terminus, the 420-residue chain is Zinc finger protein Pegasus (420 aa).

Lysine 5 participates in a covalent cross-link: Glycyl lysine isopeptide (Lys-Gly) (interchain with G-Cter in SUMO2). 3 C2H2-type zinc fingers span residues 82-104 (LKCRYCNYASKGTARLIEHIRIH), 110-132 (HRCHLCPFASAYERHLEAHMRSH), and 138-161 (YKCELCSFRCSDRSNLSHHRRRKH). Residue lysine 185 forms a Glycyl lysine isopeptide (Lys-Gly) (interchain with G-Cter in SUMO2) linkage. Polar residues-rich tracts occupy residues 223–236 (QTDSYESMAKTTPT) and 262–273 (LSSLPPENQNPA). Disordered stretches follow at residues 223-247 (QTDSYESMAKTTPTGGLPRDPQELM) and 262-356 (LSSL…PALP). The span at 290-311 (QPSTQAVVSAVSASIPQSSSPT) shows a compositional bias: low complexity. The segment covering 332-349 (SEPSAHTSTPSIGNSQPS) has biased composition (polar residues). The C2H2-type 4; degenerate zinc-finger motif lies at 364-387 (HHCQHCDMYFFADNILYTIHMGCH). The C2H2-type 5 zinc-finger motif lies at 393–417 (FQCNICGCKCKNKYDFACHFARGQH).

It belongs to the Ikaros C2H2-type zinc-finger protein family. Self-associates. Interacts with other family members; IKZF1, IKZF2, IKZF3 and IKZF4.

The protein resides in the nucleus. Its function is as follows. Transcriptional repressor that binds the core 5'GNNTGTNG-3' DNA consensus sequence. Involved in megakaryocyte differentiation. The sequence is that of Zinc finger protein Pegasus (IKZF5) from Pongo abelii (Sumatran orangutan).